Here is a 188-residue protein sequence, read N- to C-terminus: MKLDVFAGQEISELSMIEVARAILEERGRDNDMYFSDLVNEIQNYLGKSDADIRYALPFFYTDLNTDGSFIPLGENKWGLRSWYAIDEIDEEIITLEDEEDGAPKRKKKRVNAFMDGDEDAIDYSADDPEDEDFVRESSDIEYDEEDPDDEKSEVESYDSELNEIIPEDDFEEVDLNEEDEEDEEEEE.

The HTH HARE-type domain occupies 14–83 (LSMIEVARAI…GENKWGLRSW (70 aa)). A disordered region spans residues 119–188 (EDAIDYSADD…EDEEDEEEEE (70 aa)).

This sequence belongs to the RpoE family. As to quaternary structure, RNAP is composed of a core of 2 alpha, a beta and a beta' subunits. The core is associated with a delta subunit and one of several sigma factors.

Functionally, participates in both the initiation and recycling phases of transcription. In the presence of the delta subunit, RNAP displays an increased specificity of transcription, a decreased affinity for nucleic acids, and an increased efficiency of RNA synthesis because of enhanced recycling. The sequence is that of Probable DNA-directed RNA polymerase subunit delta from Streptococcus equi subsp. equi (strain 4047).